A 787-amino-acid polypeptide reads, in one-letter code: uncharacterized protein (787 aa).

Positions 1–22 (MKFKYCAIFFSGFLGLSAILAA) are cleaved as a signal peptide. Cys23 carries the N-palmitoyl cysteine lipid modification. The S-diacylglycerol cysteine moiety is linked to residue Cys23. 2 disordered regions span residues 178–270 (SDNV…DNKI) and 473–495 (KSKE…KKES). A compositionally biased stretch (polar residues) spans 181–208 (VKVSQRTGETTQKSKVTNPLKINTQNDP). Residues 209–219 (ATKDLWEKIEA) show a composition bias toward basic and acidic residues. Residues 242–261 (SSSSSLVNLKQSTDQTTTDD) show a composition bias toward low complexity.

The protein belongs to the MG185/MG260 family.

It localises to the cell membrane. This is an uncharacterized protein from Mycoplasma pneumoniae (strain ATCC 29342 / M129 / Subtype 1) (Mycoplasmoides pneumoniae).